The primary structure comprises 292 residues: 4-hydroxy-tetrahydrodipicolinate synthase (292 aa).

T45 provides a ligand contact to pyruvate. Catalysis depends on Y133, which acts as the Proton donor/acceptor. Catalysis depends on K161, which acts as the Schiff-base intermediate with substrate. A pyruvate-binding site is contributed by I203.

Belongs to the DapA family. Homotetramer; dimer of dimers.

It localises to the cytoplasm. It carries out the reaction L-aspartate 4-semialdehyde + pyruvate = (2S,4S)-4-hydroxy-2,3,4,5-tetrahydrodipicolinate + H2O + H(+). Its pathway is amino-acid biosynthesis; L-lysine biosynthesis via DAP pathway; (S)-tetrahydrodipicolinate from L-aspartate: step 3/4. Functionally, catalyzes the condensation of (S)-aspartate-beta-semialdehyde [(S)-ASA] and pyruvate to 4-hydroxy-tetrahydrodipicolinate (HTPA). The protein is 4-hydroxy-tetrahydrodipicolinate synthase of Shigella boydii serotype 18 (strain CDC 3083-94 / BS512).